The primary structure comprises 412 residues: Serine hydroxymethyltransferase (412 aa).

Residues L112 and 116 to 118 each bind (6S)-5,6,7,8-tetrahydrofolate; that span reads GHL. An N6-(pyridoxal phosphate)lysine modification is found at K221. Position 237 (E237) interacts with (6S)-5,6,7,8-tetrahydrofolate.

The protein belongs to the SHMT family. Homodimer. Pyridoxal 5'-phosphate is required as a cofactor.

It is found in the cytoplasm. The enzyme catalyses (6R)-5,10-methylene-5,6,7,8-tetrahydrofolate + glycine + H2O = (6S)-5,6,7,8-tetrahydrofolate + L-serine. It participates in one-carbon metabolism; tetrahydrofolate interconversion. It functions in the pathway amino-acid biosynthesis; glycine biosynthesis; glycine from L-serine: step 1/1. Its function is as follows. Catalyzes the reversible interconversion of serine and glycine with tetrahydrofolate (THF) serving as the one-carbon carrier. This reaction serves as the major source of one-carbon groups required for the biosynthesis of purines, thymidylate, methionine, and other important biomolecules. Also exhibits THF-independent aldolase activity toward beta-hydroxyamino acids, producing glycine and aldehydes, via a retro-aldol mechanism. The sequence is that of Serine hydroxymethyltransferase from Malacoplasma penetrans (strain HF-2) (Mycoplasma penetrans).